Reading from the N-terminus, the 575-residue chain is Urease subunit alpha (575 aa).

Residues 137-575 enclose the Urease domain; it reads GGIDCHIHFI…LPMTQRYFLF (439 aa). Positions 142, 144, and 225 each coordinate Ni(2+). Lys-225 carries the N6-carboxylysine modification. His-227 lines the substrate pocket. Ni(2+)-binding residues include His-254 and His-280. The Proton donor role is filled by His-328. A Ni(2+)-binding site is contributed by Asp-368.

Belongs to the metallo-dependent hydrolases superfamily. Urease alpha subunit family. Heterotrimer of UreA (gamma), UreB (beta) and UreC (alpha) subunits. Three heterotrimers associate to form the active enzyme. Ni cation serves as cofactor. Carboxylation allows a single lysine to coordinate two nickel ions.

The protein resides in the cytoplasm. The enzyme catalyses urea + 2 H2O + H(+) = hydrogencarbonate + 2 NH4(+). Its pathway is nitrogen metabolism; urea degradation; CO(2) and NH(3) from urea (urease route): step 1/1. This chain is Urease subunit alpha, found in Methylibium petroleiphilum (strain ATCC BAA-1232 / LMG 22953 / PM1).